The sequence spans 235 residues: Class B acid phosphatase (235 aa).

Residues 1 to 22 form the signal peptide; sequence MKNLLKLSAIAILAASAVSTFA. Asp-67 (nucleophile) is an active-site residue. 2 residues coordinate Mg(2+): Asp-67 and Asp-69. The active-site Proton donor is Asp-69. Substrate is bound by residues 135–136 and Lys-175; that span reads TG. Asp-190 provides a ligand contact to Mg(2+).

This sequence belongs to the class B bacterial acid phosphatase family. In terms of assembly, homotetramer. Requires Mg(2+) as cofactor.

It localises to the periplasm. The catalysed reaction is a phosphate monoester + H2O = an alcohol + phosphate. In terms of biological role, dephosphorylates several organic phosphate monoesters. Also has a phosphotransferase activity catalyzing the transfer of low-energy phosphate groups from organic phosphate monoesters to free hydroxyl groups of various organic compounds. This is Class B acid phosphatase from Haemophilus parainfluenzae (strain T3T1).